The primary structure comprises 510 residues: GMP synthase [glutamine-hydrolyzing] (510 aa).

In terms of domain architecture, Glutamine amidotransferase type-1 spans 5 to 195; the sequence is KILVLDFGGQ…LFKVCGVKGT (191 aa). Cysteine 82 serves as the catalytic Nucleophile. Active-site residues include histidine 169 and glutamate 171. Residues 196–385 form the GMPS ATP-PPase domain; sequence WNMADFINEE…LGLPDEIVWR (190 aa). Position 223-229 (223-229) interacts with ATP; it reads SGGVDSA.

As to quaternary structure, homodimer.

It carries out the reaction XMP + L-glutamine + ATP + H2O = GMP + L-glutamate + AMP + diphosphate + 2 H(+). It participates in purine metabolism; GMP biosynthesis; GMP from XMP (L-Gln route): step 1/1. In terms of biological role, catalyzes the synthesis of GMP from XMP. This chain is GMP synthase [glutamine-hydrolyzing], found in Halothermothrix orenii (strain H 168 / OCM 544 / DSM 9562).